We begin with the raw amino-acid sequence, 177 residues long: uncharacterized protein (177 aa).

Over residues 100–115 (QVQPHQQTHQQSQQTH) the composition is skewed to low complexity. A disordered region spans residues 100–135 (QVQPHQQTHQQSQQTHNKTVANSGDPPPPPPSQPNK). A helical transmembrane segment spans residues 141–158 (WIVGMVIGVVVLYLLYRY).

The protein localises to the membrane. This is an uncharacterized protein from Aedes vexans (Inland floodwater mosquito).